Reading from the N-terminus, the 247-residue chain is tRNA (guanine-N(1)-)-methyltransferase (247 aa).

Residues Gly-112 and 132–137 (IGDFVL) contribute to the S-adenosyl-L-methionine site.

The protein belongs to the RNA methyltransferase TrmD family. In terms of assembly, homodimer.

It is found in the cytoplasm. The catalysed reaction is guanosine(37) in tRNA + S-adenosyl-L-methionine = N(1)-methylguanosine(37) in tRNA + S-adenosyl-L-homocysteine + H(+). In terms of biological role, specifically methylates guanosine-37 in various tRNAs. In Geotalea uraniireducens (strain Rf4) (Geobacter uraniireducens), this protein is tRNA (guanine-N(1)-)-methyltransferase.